The following is a 157-amino-acid chain: 2-C-methyl-D-erythritol 2,4-cyclodiphosphate synthase (157 aa).

A divalent metal cation is bound by residues aspartate 8 and histidine 10. Residues 8–10 (DVH) and 34–35 (HS) contribute to the 4-CDP-2-C-methyl-D-erythritol 2-phosphate site. Histidine 42 contacts a divalent metal cation. Residues 56-58 (DIG), 61-65 (FPDTD), 100-106 (AQAPKML), 132-135 (TTTE), phenylalanine 139, and arginine 142 each bind 4-CDP-2-C-methyl-D-erythritol 2-phosphate.

The protein belongs to the IspF family. As to quaternary structure, homotrimer. Requires a divalent metal cation as cofactor.

The catalysed reaction is 4-CDP-2-C-methyl-D-erythritol 2-phosphate = 2-C-methyl-D-erythritol 2,4-cyclic diphosphate + CMP. Its pathway is isoprenoid biosynthesis; isopentenyl diphosphate biosynthesis via DXP pathway; isopentenyl diphosphate from 1-deoxy-D-xylulose 5-phosphate: step 4/6. Functionally, involved in the biosynthesis of isopentenyl diphosphate (IPP) and dimethylallyl diphosphate (DMAPP), two major building blocks of isoprenoid compounds. Catalyzes the conversion of 4-diphosphocytidyl-2-C-methyl-D-erythritol 2-phosphate (CDP-ME2P) to 2-C-methyl-D-erythritol 2,4-cyclodiphosphate (ME-CPP) with a corresponding release of cytidine 5-monophosphate (CMP). In Photorhabdus laumondii subsp. laumondii (strain DSM 15139 / CIP 105565 / TT01) (Photorhabdus luminescens subsp. laumondii), this protein is 2-C-methyl-D-erythritol 2,4-cyclodiphosphate synthase.